The sequence spans 92 residues: RNA-binding protein Hfq (92 aa).

Residues 9 to 68 (DPFLNALRRERVPVSVYLVNGIKLQGTIESFDQFVVLLRNTVSQMVYKHAISTVVPARNV) enclose the Sm domain. Residues 72–92 (PGGGYVQSNENNQAEDDDVEQ) form a disordered region.

This sequence belongs to the Hfq family. As to quaternary structure, homohexamer.

Functionally, RNA chaperone that binds small regulatory RNA (sRNAs) and mRNAs to facilitate mRNA translational regulation in response to envelope stress, environmental stress and changes in metabolite concentrations. Also binds with high specificity to tRNAs. This Xanthomonas campestris pv. campestris (strain 8004) protein is RNA-binding protein Hfq.